The primary structure comprises 232 residues: Octanoyltransferase (232 aa).

The 184-residue stretch at 33 to 216 folds into the BPL/LPL catalytic domain; the sequence is GRAQDTVILL…HLVRALSNGS (184 aa). Residues 71-78, 146-148, and 159-161 each bind substrate; these read RGGRITWH, AIG, and GFA. Catalysis depends on Cys-177, which acts as the Acyl-thioester intermediate.

It belongs to the LipB family.

It localises to the cytoplasm. It catalyses the reaction octanoyl-[ACP] + L-lysyl-[protein] = N(6)-octanoyl-L-lysyl-[protein] + holo-[ACP] + H(+). The protein operates within protein modification; protein lipoylation via endogenous pathway; protein N(6)-(lipoyl)lysine from octanoyl-[acyl-carrier-protein]: step 1/2. Catalyzes the transfer of endogenously produced octanoic acid from octanoyl-acyl-carrier-protein onto the lipoyl domains of lipoate-dependent enzymes. Lipoyl-ACP can also act as a substrate although octanoyl-ACP is likely to be the physiological substrate. This is Octanoyltransferase from Clavibacter sepedonicus (Clavibacter michiganensis subsp. sepedonicus).